Here is a 178-residue protein sequence, read N- to C-terminus: Oligoribonuclease (178 aa).

Positions 7 to 168 constitute an Exonuclease domain; the sequence is LIWIDLEMTG…DDIRESIAEL (162 aa). Tyr128 is an active-site residue.

It belongs to the oligoribonuclease family.

The protein resides in the cytoplasm. In terms of biological role, 3'-to-5' exoribonuclease specific for small oligoribonucleotides. The protein is Oligoribonuclease of Francisella tularensis subsp. holarctica (strain OSU18).